A 514-amino-acid polypeptide reads, in one-letter code: Protein nucleotidyltransferase YdiU (514 aa).

ATP-binding residues include Gly90, Gly92, Arg93, Lys113, Asp125, Gly126, Arg176, and Arg183. Residue Asp267 is the Proton acceptor of the active site. Positions 268 and 277 each coordinate Mg(2+). Position 277 (Asp277) interacts with ATP.

Belongs to the SELO family. The cofactor is Mg(2+). Requires Mn(2+) as cofactor.

It catalyses the reaction L-seryl-[protein] + ATP = 3-O-(5'-adenylyl)-L-seryl-[protein] + diphosphate. The catalysed reaction is L-threonyl-[protein] + ATP = 3-O-(5'-adenylyl)-L-threonyl-[protein] + diphosphate. The enzyme catalyses L-tyrosyl-[protein] + ATP = O-(5'-adenylyl)-L-tyrosyl-[protein] + diphosphate. It carries out the reaction L-histidyl-[protein] + UTP = N(tele)-(5'-uridylyl)-L-histidyl-[protein] + diphosphate. It catalyses the reaction L-seryl-[protein] + UTP = O-(5'-uridylyl)-L-seryl-[protein] + diphosphate. The catalysed reaction is L-tyrosyl-[protein] + UTP = O-(5'-uridylyl)-L-tyrosyl-[protein] + diphosphate. In terms of biological role, nucleotidyltransferase involved in the post-translational modification of proteins. It can catalyze the addition of adenosine monophosphate (AMP) or uridine monophosphate (UMP) to a protein, resulting in modifications known as AMPylation and UMPylation. The protein is Protein nucleotidyltransferase YdiU of Photobacterium profundum (strain SS9).